Consider the following 80-residue polypeptide: Cell division protein ZapB (80 aa).

Positions 3 to 80 form a coiled coil; that stretch reads FEVLEKLEAK…ALLGKMEDVE (78 aa).

It belongs to the ZapB family. In terms of assembly, homodimer. The ends of the coiled-coil dimer bind to each other, forming polymers. Interacts with FtsZ.

It localises to the cytoplasm. In terms of biological role, non-essential, abundant cell division factor that is required for proper Z-ring formation. It is recruited early to the divisome by direct interaction with FtsZ, stimulating Z-ring assembly and thereby promoting cell division earlier in the cell cycle. Its recruitment to the Z-ring requires functional FtsA or ZipA. This Vibrio vulnificus (strain CMCP6) protein is Cell division protein ZapB.